A 673-amino-acid chain; its full sequence is UvrABC system protein B (673 aa).

In terms of domain architecture, Helicase ATP-binding spans 26 to 414 (EGLEDGLAHQ…GGDVVDQVVR (389 aa)). 39-46 (GVTGSGKT) provides a ligand contact to ATP. The Beta-hairpin motif lies at 92-115 (YYDYYQPEAYVPSSDTFIEKDASV). Residues 431 to 597 (QVDDLLSEIR…GLNKKVVDIL (167 aa)) form the Helicase C-terminal domain. Positions 633–668 (QQKIHELEGLMMQHAQNLEFEEAAQIRDQLHQLREL) constitute a UVR domain.

It belongs to the UvrB family. Forms a heterotetramer with UvrA during the search for lesions. Interacts with UvrC in an incision complex.

The protein resides in the cytoplasm. Its function is as follows. The UvrABC repair system catalyzes the recognition and processing of DNA lesions. A damage recognition complex composed of 2 UvrA and 2 UvrB subunits scans DNA for abnormalities. Upon binding of the UvrA(2)B(2) complex to a putative damaged site, the DNA wraps around one UvrB monomer. DNA wrap is dependent on ATP binding by UvrB and probably causes local melting of the DNA helix, facilitating insertion of UvrB beta-hairpin between the DNA strands. Then UvrB probes one DNA strand for the presence of a lesion. If a lesion is found the UvrA subunits dissociate and the UvrB-DNA preincision complex is formed. This complex is subsequently bound by UvrC and the second UvrB is released. If no lesion is found, the DNA wraps around the other UvrB subunit that will check the other stand for damage. The polypeptide is UvrABC system protein B (Shigella flexneri).